Reading from the N-terminus, the 900-residue chain is Nuclear factor NF-kappa-B p100 subunit (900 aa).

A phosphoserine mark is found at Ser23 and Ser161. Positions 38 to 343 (PYLVIVEQPK…EVQRKRRKAL (306 aa)) constitute an RHD domain. Residues 337–341 (RKRRK) carry the Nuclear localization signal motif. The GRR stretch occupies residues 346–377 (FSQPFGGGSHMGGGSGGAAGGYGGAGGGGSLG). The interval 404–435 (GAQMAATVPSRDSGEEAAEPSAPSRTPQCEPQ) is disordered. Residue Thr429 is modified to Phosphothreonine. ANK repeat units lie at residues 487–519 (NGDT…DLGV), 526–555 (LHQT…DPAL), 559–591 (HGDS…AVPQ), 599–628 (EGLY…EVEA), 633–663 (GGRT…NVNA), and 667–696 (AGNT…DIHA). The segment at 698–734 (NEEPLCPLPSPPTSDSDSDSEGPEKDTRSSFRGHTPL) is disordered. Ser713, Ser715, and Ser717 each carry phosphoserine. The ANK 7 repeat unit spans residues 729–758 (RGHTPLDLTCSTKVKTLLLNAAQNTMEPPL). Residues 764-851 (AGPGLSLGDT…EGVRLLRGPE (88 aa)) form the Death domain. Ser812 is modified (phosphoserine). The segment covering 849–866 (GPETRDKLPSTAEVKEDS) has biased composition (basic and acidic residues). Residues 849 to 900 (GPETRDKLPSTAEVKEDSAYGSQSVEQEAEKLGPPPEPPGGLCHGHPQPQVH) are disordered. A Glycyl lysine isopeptide (Lys-Gly) (interchain with G-Cter in ubiquitin) cross-link involves residue Lys855. A phosphoserine; by MAP3K14 mark is found at Ser866 and Ser870. The segment covering 888–900 (GGLCHGHPQPQVH) has biased composition (low complexity).

As to quaternary structure, component of the NF-kappa-B RelB-p52 complex. Homodimer; component of the NF-kappa-B p52-p52 complex. Component of the NF-kappa-B p65-p52 complex. Component of the NF-kappa-B p52-c-Rel complex. NFKB2/p52 interacts with NFKBIE. Component of a complex consisting of the NF-kappa-B p50-p50 homodimer and BCL3. Directly interacts with MEN1. Post-translationally, while translation occurs, the particular unfolded structure after the GRR repeat promotes the generation of p52 making it an acceptable substrate for the proteasome. This process is known as cotranslational processing. The processed form is active and the unprocessed form acts as an inhibitor (I kappa B-like), being able to form cytosolic complexes with NF-kappa B, trapping it in the cytoplasm. Complete folding of the region downstream of the GRR repeat precludes processing. In terms of processing, subsequent to MAP3K14-dependent serine phosphorylation, p100 polyubiquitination occurs then triggering its proteasome-dependent processing. Constitutive processing is tightly suppressed by its C-terminal processing inhibitory domain, named PID, which contains the death domain. Post-translationally, ubiquitinated by TRIM55; leading to processing by VCP and subsequent ubiquitin-dependent protein degradation by the proteasome.

It localises to the nucleus. The protein localises to the cytoplasm. In terms of biological role, NF-kappa-B is a pleiotropic transcription factor present in almost all cell types and is the endpoint of a series of signal transduction events that are initiated by a vast array of stimuli related to many biological processes such as inflammation, immunity, differentiation, cell growth, tumorigenesis and apoptosis. NF-kappa-B is a homo- or heterodimeric complex formed by the Rel-like domain-containing proteins RELA/p65, RELB, NFKB1/p105, NFKB1/p50, REL and NFKB2/p52. The dimers bind at kappa-B sites in the DNA of their target genes and the individual dimers have distinct preferences for different kappa-B sites that they can bind with distinguishable affinity and specificity. Different dimer combinations act as transcriptional activators or repressors, respectively. NF-kappa-B is controlled by various mechanisms of post-translational modification and subcellular compartmentalization as well as by interactions with other cofactors or corepressors. NF-kappa-B complexes are held in the cytoplasm in an inactive state complexed with members of the NF-kappa-B inhibitor (I-kappa-B) family. In a conventional activation pathway, I-kappa-B is phosphorylated by I-kappa-B kinases (IKKs) in response to different activators, subsequently degraded thus liberating the active NF-kappa-B complex which translocates to the nucleus. In a non-canonical activation pathway, the MAP3K14-activated CHUK/IKKA homodimer phosphorylates NFKB2/p100 associated with RelB, inducing its proteolytic processing to NFKB2/p52 and the formation of NF-kappa-B RelB-p52 complexes. The NF-kappa-B heterodimeric RelB-p52 complex is a transcriptional activator. The NF-kappa-B p52-p52 homodimer is a transcriptional repressor. NFKB2 appears to have dual functions such as cytoplasmic retention of attached NF-kappa-B proteins by p100 and generation of p52 by a cotranslational processing. The proteasome-mediated process ensures the production of both p52 and p100 and preserves their independent function. p52 binds to the kappa-B consensus sequence 5'-GGRNNYYCC-3', located in the enhancer region of genes involved in immune response and acute phase reactions. p52 and p100 are respectively the minor and major form; the processing of p100 being relatively poor. Isoform p49 is a subunit of the NF-kappa-B protein complex, which stimulates the HIV enhancer in synergy with p65. In concert with RELB, regulates the circadian clock by repressing the transcriptional activator activity of the CLOCK-BMAL1 heterodimer. This Homo sapiens (Human) protein is Nuclear factor NF-kappa-B p100 subunit (NFKB2).